The chain runs to 617 residues: Electron transfer flavoprotein-ubiquinone oxidoreductase, mitochondrial (617 aa).

The N-terminal 33 residues, Met-1–Trp-33, are a transit peptide targeting the mitochondrion. Val-71–Val-85 contributes to the FAD binding site. N6-acetyllysine is present on Lys-96. An intramembrane segment occupies Ile-109–Asp-130. Lys-132 and Lys-223 each carry N6-acetyllysine. Residues Gly-305 and Gly-306 each coordinate a ubiquinone. Residue Lys-357 is modified to N6-acetyllysine. Residues Ile-428–Glu-447 lie within the membrane without spanning it. Position 551 is a phosphoserine (Ser-551). 4 residues coordinate [4Fe-4S] cluster: Cys-561, Cys-586, Cys-589, and Cys-592. Residues Phe-577–Pro-606 enclose the 4Fe-4S ferredoxin-type domain.

This sequence belongs to the ETF-QO/FixC family. As to quaternary structure, monomer. It depends on [4Fe-4S] cluster as a cofactor. FAD is required as a cofactor.

The protein resides in the mitochondrion inner membrane. The catalysed reaction is a ubiquinone + reduced [electron-transfer flavoprotein] = a ubiquinol + oxidized [electron-transfer flavoprotein] + H(+). In terms of biological role, accepts electrons from ETF and reduces ubiquinone. In Homo sapiens (Human), this protein is Electron transfer flavoprotein-ubiquinone oxidoreductase, mitochondrial.